A 284-amino-acid polypeptide reads, in one-letter code: uncharacterized protein (284 aa).

The N-terminal stretch at 1-23 (MKRGCAIAVMICGLITSVSAASA) is a signal peptide.

Belongs to the surface antigen msp4 family.

This is an uncharacterized protein from Brucella suis biovar 1 (strain 1330).